The following is a 260-amino-acid chain: Thiamine thiazole synthase (260 aa).

NAD(+) is bound by residues serine 41, 60–61 (ER), glycine 68, valine 131, and 159–161 (HVD). Fe cation contacts are provided by aspartate 161 and histidine 176. Residue methionine 225 participates in NAD(+) binding. Residue arginine 235 participates in glycine binding.

Belongs to the THI4 family. Homooctamer; tetramer of dimers. Fe(2+) is required as a cofactor.

The catalysed reaction is hydrogen sulfide + glycine + NAD(+) = ADP-5-ethyl-4-methylthiazole-2-carboxylate + nicotinamide + 3 H2O + H(+). It participates in cofactor biosynthesis; thiamine diphosphate biosynthesis. In terms of biological role, involved in the biosynthesis of the thiazole moiety of thiamine. Catalyzes the conversion of NAD and glycine to adenosine diphosphate 5-(2-hydroxyethyl)-4-methylthiazole-2-carboxylate (ADT), an adenylated thiazole intermediate, using free sulfide as a source of sulfur. This Archaeoglobus fulgidus (strain ATCC 49558 / DSM 4304 / JCM 9628 / NBRC 100126 / VC-16) protein is Thiamine thiazole synthase.